The sequence spans 538 residues: MKRPKLKKASKRMTCHKRYKIQKKVREHHRKLRKEAKKRGHKKPRKDPGVPNSAPFKEALLREAELRKQQLEELKQQQKLDRQKEQERKRKLEVSPGDEQSNVETREESDEPKRKKAKAGKQNPKKLHCQELKKVIEASDIVLEVLDARDPLGCRCPQIEEAVIQSGSKKLILVLNKSDLVPKENLENWLNYLNKELPTVVFKASTNLKNRKTFKIKKKKVVPFQSKICCGKEALWKLLGDFQQSCGKDIQVGVIGFPNVGKSSVINSLKQEWICNVGISMGLTRSMQIVPLDKQITIIDSPCLIISPCNSPTALALRSPASIEELRPLEAASAILSQADNEQVVLKYTVPEYKDSLHFFTKLAQRRGLHQKGGSPNVESAAKLVWSEWTGASLGYYCHPPASWNHSLHFNENIAAVMKKGFNLEELEKNNAHSIQVLKGPHLTNRILFRSSGLTNGILDEKDIVEESPRQTEDKQDADDQENGSGERNAEISDVAPVEETRELSPEQSTAGKPSDGSSALDRASQEDETYDFTTDYI.

Residues 1-45 (MKRPKLKKASKRMTCHKRYKIQKKVREHHRKLRKEAKKRGHKKPR) are compositionally biased toward basic residues. 2 disordered regions span residues 1–57 (MKRP…APFK) and 69–126 (QQLE…NPKK). Residues 2-46 (KRPKLKKASKRMTCHKRYKIQKKVREHHRKLRKEAKKRGHKKPRK) form a basic region. Positions 54–95 (APFKEALLREAELRKQQLEELKQQQKLDRQKEQERKRKLEVS) form a coiled coil. A compositionally biased stretch (basic and acidic residues) spans 69 to 93 (QQLEELKQQQKLDRQKEQERKRKLE). At lysine 79 the chain carries N6-acetyllysine. A Glycyl lysine isopeptide (Lys-Gly) (interchain with G-Cter in SUMO2) cross-link involves residue lysine 91. Phosphoserine is present on residues serine 95 and serine 101. The span at 114–126 (RKKAKAGKQNPKK) shows a compositional bias: basic residues. The 179-residue stretch at 129 to 307 (CQELKKVIEA…IIDSPCLIIS (179 aa)) folds into the CP-type G domain. 176-179 (NKSD) is a GTP binding site. Glycyl lysine isopeptide (Lys-Gly) (interchain with G-Cter in SUMO2) cross-links involve residues lysine 177, lysine 248, lysine 262, and lysine 270. A GTP-binding site is contributed by 256 to 263 (GFPNVGKS). Residues 277–451 (VGISMGLTRS…HLTNRILFRS (175 aa)) form an intermediate region. GTP is bound at residue 300-303 (DSPC). The span at 460–475 (DEKDIVEESPRQTEDK) shows a compositional bias: basic and acidic residues. The interval 460–532 (DEKDIVEESP…RASQEDETYD (73 aa)) is acidic. The segment at 460–538 (DEKDIVEESP…ETYDFTTDYI (79 aa)) is disordered. 3 positions are modified to phosphoserine: serine 493, serine 505, and serine 518. Residues 506 to 518 (PEQSTAGKPSDGS) are compositionally biased toward polar residues.

Belongs to the TRAFAC class YlqF/YawG GTPase family. Interacts with MDM2; this interaction stabilizes MDM2. Interaction with MDM2 occurs in the nucleoplasm and is triggered by a nucleolar release mechanism, such as mitosis-induced nucleolar disassembly. Indirectly interacts with TP53, via MDM2-binding. Interacts with TSC22D1 isoform 2. Expressed in the adult bone marrow population that is enriched in hematopoietic stem cells.

Its subcellular location is the nucleus. The protein resides in the nucleolus. May be required to maintain the proliferative capacity of stem cells. Stabilizes MDM2 by preventing its ubiquitination, and hence proteasomal degradation. This chain is Guanine nucleotide-binding protein-like 3 (Gnl3), found in Mus musculus (Mouse).